Here is a 684-residue protein sequence, read N- to C-terminus: MSMPLQRGISGVRVSDSSDDLRDSQMKDKTERARSTENNNLTLRFPFGFLFSNQSSSKHGGGGENGFSADPYSARSRHRLMLLFLKISLVLIVVIALAGSFWWTISISTSSRGHVYHNYRRLQEQLVSDLWDIGEISLGPNRWKELEYCNIESENFVPCFNVSENLALGYSNGDENDRFCGPGSKQECLELPPVKYRVPLRWPTGKDIIWHSNVKITAQEVVSSGSITKRMMMMEDDQISFRSASPMSDEVEDYSHQIAEMIGIKKDNFIEAGVRTILDIGCGYGSFGAHLLSKQILTMCIANYEASGSQVQLTLERGLPAMIGSFISKQLPYPSLSFDMLHCLRCGIDWDQKDGLLLVEIDRVLKPGGYFVWTSPLTNPRNKDHLKRWNFVHDFAESICWTLLNQQDETVVWKKTINTKCYSSRKPGVGPSVCTKGHDVESPYYRPLQMCIGGTRSRRWIPIEGRTRWPSRSNMNKTELSLYGLHPEVLGEDAENWKITVREYWSLLSPLIFSDHPKRPGDEDPSPPYNMLRNVLDMNAQFGGLNSALLEARKSVWVMNVVPTAGPNHLPMILDRGFVGVLHNWCEPFPTYPRTYDLVHADNLLSLQTSQPRKTCLLIDIFTEIDRLLRPEGWVIIRDTAQLVEKARETITQLKWEARVIEVESSSEQRLLICQKPFTKRQSI.

Residues 1–35 (MSMPLQRGISGVRVSDSSDDLRDSQMKDKTERARS) are disordered. Residues 1–86 (MSMPLQRGIS…RHRLMLLFLK (86 aa)) are Cytoplasmic-facing. Over residues 19 to 35 (DDLRDSQMKDKTERARS) the composition is skewed to basic and acidic residues. Residues 87–107 (ISLVLIVVIALAGSFWWTISI) traverse the membrane as a helical; Signal-anchor for type II membrane protein segment. Residues 108-684 (STSSRGHVYH…QKPFTKRQSI (577 aa)) are Lumenal-facing. Asparagine 161 and asparagine 476 each carry an N-linked (GlcNAc...) asparagine glycan.

The protein belongs to the methyltransferase superfamily. As to expression, ubiquitous.

It is found in the golgi apparatus membrane. The protein operates within glycan metabolism; pectin biosynthesis. Functionally, may be involved in the synthesis of homogalacturonan. Required for normal cell adhesion and plant development. The sequence is that of Probable pectin methyltransferase QUA2 (QUA2) from Arabidopsis thaliana (Mouse-ear cress).